A 192-amino-acid polypeptide reads, in one-letter code: uncharacterized protein (192 aa).

In terms of domain architecture, Nudix hydrolase spans 29–160 (HRQAAVLIPI…PLDIYRRGDS (132 aa)). Positions 67-89 (GAVDDTDASVIAAALREAEEEVA) match the Nudix box motif. Mg(2+) is bound by residues Glu-83 and Glu-87.

Belongs to the Nudix hydrolase family. PCD1 subfamily. The cofactor is Mn(2+). It depends on Mg(2+) as a cofactor.

Probably mediates the hydrolysis of some nucleoside diphosphate derivatives. This is an uncharacterized protein from Escherichia coli O139:H28 (strain E24377A / ETEC).